Here is a 325-residue protein sequence, read N- to C-terminus: Glutarate 2-hydroxylase (325 aa).

The Fe cation site is built by His-160, Asp-162, and His-292.

It belongs to the glutarate hydroxylase family. In terms of assembly, homotetramer. Fe(2+) is required as a cofactor.

The catalysed reaction is glutarate + 2-oxoglutarate + O2 = (S)-2-hydroxyglutarate + succinate + CO2. It participates in amino-acid degradation. In terms of biological role, acts as an alpha-ketoglutarate-dependent dioxygenase catalyzing hydroxylation of glutarate (GA) to L-2-hydroxyglutarate (L2HG). Functions in a L-lysine degradation pathway that proceeds via cadaverine, glutarate and L-2-hydroxyglutarate. The sequence is that of Glutarate 2-hydroxylase from Pseudomonas putida (strain ATCC 700007 / DSM 6899 / JCM 31910 / BCRC 17059 / LMG 24140 / F1).